The sequence spans 461 residues: Cyclic 2,3-diphosphoglycerate synthetase (461 aa).

This sequence belongs to the cyclic 2,3-diphosphoglycerate synthetase family.

Its subcellular location is the cytoplasm. The enzyme catalyses (2R)-2,3-bisphosphoglycerate + ATP + H(+) = cyclic (2R)-2,3-bisphosphoglycerate + ADP + phosphate. Its function is as follows. Catalyzes the formation of cyclic 2,3-diphosphoglycerate (cDPG) by formation of an intramolecular phosphoanhydride bond at the expense of ATP. This chain is Cyclic 2,3-diphosphoglycerate synthetase, found in Methanosphaera stadtmanae (strain ATCC 43021 / DSM 3091 / JCM 11832 / MCB-3).